A 295-amino-acid polypeptide reads, in one-letter code: MDLLKFSSLAISEINFLHESSFDSIDHSWFLLIGCKLDQDDEIYIPINGNEAESQWYIEKVIRIPMQENDKINQERLERRINLTKVTQKDICILGILDLCQLEEDENITNKVTEKVLTQLTALALKYLIKYNVFRQHTSFQEAVNSLKGYKIENSVQIGAEIILDFLQDKVQIKDVNDRYQIPTPNNTVDPGFDEFQLIDMKDKEINIQKYNNNTIRKLLEKINRMIIFLKNYDATDKPFSSTQDVILRKISMLVTQLQRGGTSDMNYLLDNKINEIKLLEISCKQWEISNMLKK.

Component of a COP9 signalosome-like (CSN) complex, composed of RRI1/CSN5, CSN9, RRI2/CSN10, PCI8/CSN11, CSN12 and CSI1. In the complex, it probably interacts directly with CSN9 and CSN12. Interacts also with RPN5.

It is found in the cytoplasm. Its subcellular location is the nucleus. In terms of biological role, component of the COP9 signalosome (CSN) complex that acts as an regulator of the ubiquitin (Ubl) conjugation pathway by mediating the deneddylation of the cullin subunit of SCF-type E3 ubiquitin-protein ligase complexes The CSN complex is involved in the regulation of the mating pheromone response. In Saccharomyces cerevisiae (strain ATCC 204508 / S288c) (Baker's yeast), this protein is Cop9 signalosome-interactor 1 (CSI1).